We begin with the raw amino-acid sequence, 547 residues long: GID complex substrate-recognition subunit 10 (547 aa).

Polar residues-rich tracts occupy residues 1 to 11 and 28 to 41; these read MPRSLDNFQNE and GFPNPNSNDVSNSQ. Disordered stretches follow at residues 1 to 42, 60 to 115, 169 to 217, and 285 to 313; these read MPRS…NSQR, EQDS…SNAT, RNSS…NPQS, and PAVLDLNGPPNQESSSSASSYGSRTQTPN. Over residues 99–108 the composition is skewed to basic residues; sequence SASRQRRRSG. Residues 169 to 185 show a composition bias toward polar residues; the sequence is RNSSTFGSNPNSVFSAQ. Low complexity-rich tracts occupy residues 186-199, 207-217, and 298-307; these read PTEPSVEPPTSSFP, SRSISISNPQS, and SSSSASSYGS.

Belongs to the GID4/VID24 family. In terms of assembly, substrate-recognition component of the GID/CTLH complex. In the absence of stress, the complex exists as an inactive anticipatory complex (GID(Ant)), composed of Gid1, the E3 ubiquitin-ligase Gid2, Gid5, Gid8, and the RING-like subunit Gid9, awaiting a substrate receptor to form the active E3 ligase complex. When cells are shifted to glucose-containing medium, the substrate receptor Gid4 is induced and becomes part of the complex, named GID(SR4). Additionally, Gid7 transforms the GID(SR4) E3 ligase core into a higher-order supramolecular assembly (Chelator-GID(SR4)). Under osmotic or heat stress, the substrate receptor Gid10 is induced and becomes part of the complex, named GID(SR10). Interacts with proteins that have an N-terminal Pro/N-degron.

It localises to the nucleus. Substrate-recognition component of the GID E3 ligase complex recruiting N termini and catalyzing ubiquitination of proteins targeted for degradation. GID E3 is regulated through assembly with interchangeable N-degron-binding substrate receptors induced by distinct environmental perturbations. Required for the adaptation to osmotic or heat stress. Specific for substrates with an N-terminal Pro (Pro/N-degron). The protein is GID complex substrate-recognition subunit 10 (gid10) of Schizosaccharomyces pombe (strain 972 / ATCC 24843) (Fission yeast).